The chain runs to 485 residues: MTHWIAGDWVSGHGETIQSLSPYNSNVVWQGESATKDQVESAVSAARHAFIEWKKQPFEARQVIIERFAALVKENTDKIAEVISKETGKPFWETKTEAGAMVGKIAISIRAYHERTPHKEREAAGNKIVLRHRPLGVMAVFGPYNFPGHLPNGHIVPALLAGNTVVLKPSEQTPWTSEVIMKLWQQAGLPNGVINLVQGARETGEALASAKGIDGLLFTGSANTGHILHRQFSGDTGKMLALEMGGNNPMVISKSFGEQEAAVYTIIQSAFISAGQRCTCARRLYVPIGKAGDELLVRLVEVAKTIVVDQPFAENTPFMGPQISIAAAEFILNAQKNLQDLGGESLLEAKSLGHAFVSPGIIDATNVAELPDEEYFGPLLQVVRYETLEEAVELANDTRYGLSAGLVSTDDSEWEYFVEHIRAGIVNRNRQLTGASGDAPFGGPGASGNMKPSAYYAADYCAYPMASMEGDACEIPAQLSPGLTL.

Glycine 220–glycine 225 lines the NAD(+) pocket. Residues glutamate 243 and cysteine 278 contribute to the active site.

It belongs to the aldehyde dehydrogenase family. AstD subfamily.

It catalyses the reaction N-succinyl-L-glutamate 5-semialdehyde + NAD(+) + H2O = N-succinyl-L-glutamate + NADH + 2 H(+). Its pathway is amino-acid degradation; L-arginine degradation via AST pathway; L-glutamate and succinate from L-arginine: step 4/5. Functionally, catalyzes the NAD-dependent reduction of succinylglutamate semialdehyde into succinylglutamate. This is N-succinylglutamate 5-semialdehyde dehydrogenase from Aliivibrio salmonicida (strain LFI1238) (Vibrio salmonicida (strain LFI1238)).